Consider the following 223-residue polypeptide: Small heat shock protein hspI, mitochondrial (223 aa).

A mitochondrion-targeting transit peptide spans 1-23 (MYKLSKTTPFFFRRAFLCGRRGG). The sHSP domain occupies 109-223 (KTRGFRSPKT…YVKSTTINVQ (115 aa)).

Belongs to the small heat shock protein (HSP20) family.

It is found in the mitochondrion. The polypeptide is Small heat shock protein hspI, mitochondrial (hspI) (Dictyostelium discoideum (Social amoeba)).